The chain runs to 441 residues: tRNA modification GTPase MnmE (441 aa).

(6S)-5-formyl-5,6,7,8-tetrahydrofolate is bound by residues arginine 21, glutamate 78, and lysine 117. The region spanning 211–363 (GIVMTIVGKP…LENKIVSKVK (153 aa)) is the TrmE-type G domain. A K(+)-binding site is contributed by asparagine 221. GTP-binding positions include 221–226 (NSGKST), 240–246 (TDIPGTT), and 265–268 (DTAG). Residue serine 225 coordinates Mg(2+). K(+)-binding residues include threonine 240, isoleucine 242, and threonine 245. A Mg(2+)-binding site is contributed by threonine 246. Residue lysine 441 coordinates (6S)-5-formyl-5,6,7,8-tetrahydrofolate.

It belongs to the TRAFAC class TrmE-Era-EngA-EngB-Septin-like GTPase superfamily. TrmE GTPase family. Homodimer. Heterotetramer of two MnmE and two MnmG subunits. The cofactor is K(+).

It is found in the cytoplasm. In terms of biological role, exhibits a very high intrinsic GTPase hydrolysis rate. Involved in the addition of a carboxymethylaminomethyl (cmnm) group at the wobble position (U34) of certain tRNAs, forming tRNA-cmnm(5)s(2)U34. The polypeptide is tRNA modification GTPase MnmE (Thermosipho melanesiensis (strain DSM 12029 / CIP 104789 / BI429)).